The following is a 393-amino-acid chain: Beta-1,4-galactosyltransferase 3 (393 aa).

Topologically, residues 1-10 (MLRRLLERPC) are cytoplasmic. A helical; Signal-anchor for type II membrane protein membrane pass occupies residues 11-31 (TLALLVGSQLAVMMYLSLGGF). The Lumenal segment spans residues 32–393 (RSLSALFGRD…ANHTALRGSH (362 aa)). An N-linked (GlcNAc...) asparagine glycan is attached at N57. C77 and C119 are disulfide-bonded. 130–134 (PHRAR) is a binding site for UDP-alpha-D-galactose. N166 carries an N-linked (GlcNAc...) asparagine glycan. UDP-alpha-D-galactose is bound by residues 169-171 (FNR), 196-197 (VD), Y226, and W258. The cysteines at positions 190 and 209 are disulfide-linked. Position 197 (D197) interacts with Mn(2+). 260–263 (GEDD) is a binding site for N-acetyl-D-glucosamine. H291 serves as a coordination point for Mn(2+). 291 to 293 (HRG) provides a ligand contact to UDP-alpha-D-galactose. R303 serves as a coordination point for N-acetyl-D-glucosamine. N337 and N385 each carry an N-linked (GlcNAc...) asparagine glycan. The segment at 339–393 (TADIGTDPRGPRAPSGPRYPPGSSQAFRQEMLQRRPPARPGPPPTANHTALRGSH) is disordered.

Belongs to the glycosyltransferase 7 family. Mn(2+) serves as cofactor.

It localises to the golgi apparatus. The protein localises to the golgi stack membrane. The catalysed reaction is an N-acetyl-beta-D-glucosaminyl derivative + UDP-alpha-D-galactose = a beta-D-galactosyl-(1-&gt;4)-N-acetyl-beta-D-glucosaminyl derivative + UDP + H(+). The enzyme catalyses N-acetyl-D-glucosamine + UDP-alpha-D-galactose = beta-D-galactosyl-(1-&gt;4)-N-acetyl-D-glucosamine + UDP + H(+). It carries out the reaction a beta-D-GlcNAc-(1-&gt;3)-beta-D-Gal-(1-&gt;4)-beta-D-Glc-(1&lt;-&gt;1)-Cer(d18:1(4E)) + UDP-alpha-D-galactose = a neolactoside nLc4Cer(d18:1(4E)) + UDP + H(+). It catalyses the reaction a beta-D-glucosylceramide + UDP-alpha-D-galactose = a beta-D-galactosyl-(1-&gt;4)-beta-D-glucosyl-(1&lt;-&gt;1)-ceramide + UDP + H(+). The catalysed reaction is a neolactoside IV(3)-beta-GlcNAc-nLc4Cer + UDP-alpha-D-galactose = a neolactoside nLc6Cer + UDP + H(+). Its pathway is protein modification; protein glycosylation. Functionally, responsible for the synthesis of complex-type N-linked oligosaccharides in many glycoproteins as well as the carbohydrate moieties of glycolipids. The chain is Beta-1,4-galactosyltransferase 3 (B4GALT3) from Pongo abelii (Sumatran orangutan).